Reading from the N-terminus, the 156-residue chain is Large ribosomal subunit protein eL24 (156 aa).

The segment covering 110–123 has biased composition (basic and acidic residues); that stretch reads RAAKEKQKQKELEK. The segment at 110–156 is disordered; the sequence is RAAKEKQKQKELEKKAKKVEKKKPTLAPKQKAAKITQKPAPRVGGKR.

The protein belongs to the eukaryotic ribosomal protein eL24 family.

This chain is Large ribosomal subunit protein eL24 (RPL24), found in Schistosoma japonicum (Blood fluke).